Here is a 107-residue protein sequence, read N- to C-terminus: U1-lycotoxin-Ls1b (107 aa).

The N-terminal stretch at 1–20 (MMKVLVVVALLVTLISYSSG) is a signal peptide. A propeptide spanning residues 21 to 41 (EGIDDLEADELLSLMANEQTR) is cleaved from the precursor. Disulfide bonds link C44-C59, C51-C68, C58-C86, and C70-C84.

It belongs to the neurotoxin 19 (CSTX) family. 04 (U1-Lctx) subfamily. In terms of tissue distribution, expressed by the venom gland.

The protein localises to the secreted. The polypeptide is U1-lycotoxin-Ls1b (Lycosa singoriensis (Wolf spider)).